We begin with the raw amino-acid sequence, 316 residues long: Pantothenate kinase (316 aa).

95 to 102 (GSVAVGKS) contacts ATP.

This sequence belongs to the prokaryotic pantothenate kinase family.

It is found in the cytoplasm. It catalyses the reaction (R)-pantothenate + ATP = (R)-4'-phosphopantothenate + ADP + H(+). The protein operates within cofactor biosynthesis; coenzyme A biosynthesis; CoA from (R)-pantothenate: step 1/5. The sequence is that of Pantothenate kinase from Shewanella sp. (strain MR-4).